The following is an 85-amino-acid chain: Large ribosomal subunit protein bL27 (85 aa).

Residues 1 to 20 (MAHKKAGGSTRNGRDSEAKR) form a disordered region.

Belongs to the bacterial ribosomal protein bL27 family.

This is Large ribosomal subunit protein bL27 from Enterobacter sp. (strain 638).